We begin with the raw amino-acid sequence, 510 residues long: MKEDKILVLDFGGQYSQLIARRVRECNVYSIIKPYNISIDQIKDINPAGIIFSGGPKSVTGPEAPMIDKEVFKLNIPILGICYGMQLMTALLPGGAVEKARHGEYGKARLHITEKDKLFEGISDSQVWMSHWDRVKKVPDGFKVTAKTDITPVAAMGNPELKFYGVQFHPEVVHTIQGLNIIRNYLFKVCGVKGTWNMADFINEEIDRIKEEVGSSQVISGLSGGVDSAVASTMVHRAIGDQLTCIFVDHGLLRKGEAEQVKRTFVDEFNIPLVYVDARERFLNRLNGVKDPETKRKIIGEEFIRVFEEEARKLGDARYLVQGTLYSDVIESGSETAETIKSHHNVGGLPDNMDFKLIEPLRNLFKDEVRKIGEVLGLPDEIVWRQPFPGPGLAIRIIGEIDGKKLEILRKADSIIQEEIKEAGYYKEIWQSFAVLPDLKSVGVMGDTRTYGYPIILRAVTSDDAMTADWARLPYELLEKISTRIVNEVDSVNRVVYDITSKPPATIEWE.

A Glutamine amidotransferase type-1 domain is found at 5-195; it reads KILVLDFGGQ…LFKVCGVKGT (191 aa). Residue Cys-82 is the Nucleophile of the active site. Active-site residues include His-169 and Glu-171. Residues 196–385 form the GMPS ATP-PPase domain; the sequence is WNMADFINEE…LGLPDEIVWR (190 aa). 223-229 is an ATP binding site; the sequence is SGGVDSA.

As to quaternary structure, homodimer.

The enzyme catalyses XMP + L-glutamine + ATP + H2O = GMP + L-glutamate + AMP + diphosphate + 2 H(+). It functions in the pathway purine metabolism; GMP biosynthesis; GMP from XMP (L-Gln route): step 1/1. Catalyzes the synthesis of GMP from XMP. In Halothermothrix orenii (strain H 168 / OCM 544 / DSM 9562), this protein is GMP synthase [glutamine-hydrolyzing].